A 210-amino-acid chain; its full sequence is Protein GrpE (210 aa).

The tract at residues 1–31 (MAKDPQTPTDEELARAERDAEPQPGDATDDE) is disordered. Residues 12-21 (ELARAERDAE) are compositionally biased toward basic and acidic residues.

It belongs to the GrpE family. Homodimer.

It localises to the cytoplasm. Functionally, participates actively in the response to hyperosmotic and heat shock by preventing the aggregation of stress-denatured proteins, in association with DnaK and GrpE. It is the nucleotide exchange factor for DnaK and may function as a thermosensor. Unfolded proteins bind initially to DnaJ; upon interaction with the DnaJ-bound protein, DnaK hydrolyzes its bound ATP, resulting in the formation of a stable complex. GrpE releases ADP from DnaK; ATP binding to DnaK triggers the release of the substrate protein, thus completing the reaction cycle. Several rounds of ATP-dependent interactions between DnaJ, DnaK and GrpE are required for fully efficient folding. The polypeptide is Protein GrpE (Chromohalobacter salexigens (strain ATCC BAA-138 / DSM 3043 / CIP 106854 / NCIMB 13768 / 1H11)).